The following is a 344-amino-acid chain: MREQLTALKHEALDKAEVAKSEQDIQAIRVAYLGKKGPITEVLRGMGKLSAEERPIIGALANEVRDEIKNKLDEKSKKLQEAAIKQQLEQESIDVTLPGRPALQGAIHPLTAVVTEIEEIFLGLGFSIGEGPEIETDYYNFEAMNLPKDHPARDMQDSFYVTEDLLLRTQTSPVQARTMEKFAGKGPVKVVVPGKVFRRDDDDATHSHQFMQVEGLYVDKKVRMSDLKGVLETFAKQFFGQDRSIRLRPSFFPFTEPSVEVDVSCGICSGKGCRVCKQSGWIEVLGAGMVHPRVLEMSGFDANEYSGFAFGMGVERLAMLKYDIDDIRQFYANDLRFLMQFKDV.

A Mg(2+)-binding site is contributed by E256.

Belongs to the class-II aminoacyl-tRNA synthetase family. Phe-tRNA synthetase alpha subunit type 1 subfamily. As to quaternary structure, tetramer of two alpha and two beta subunits. The cofactor is Mg(2+).

It localises to the cytoplasm. The enzyme catalyses tRNA(Phe) + L-phenylalanine + ATP = L-phenylalanyl-tRNA(Phe) + AMP + diphosphate + H(+). The polypeptide is Phenylalanine--tRNA ligase alpha subunit (Shouchella clausii (strain KSM-K16) (Alkalihalobacillus clausii)).